The primary structure comprises 243 residues: Terpene cyclase penB (243 aa).

A run of 3 helical transmembrane segments spans residues 19–39, 48–68, and 78–98; these read IANI…VGMI, YGMA…YSLI, and GVFI…IKFA. Asparagine 111 is a glycosylation site (N-linked (GlcNAc...) asparagine). The next 4 helical transmembrane spans lie at 112-132, 137-157, 172-194, and 205-225; these read LSLI…ALAA, SLAY…GGLC, LWLS…WMYW, and LVLW…LCYW.

This sequence belongs to the paxB family.

It is found in the membrane. It functions in the pathway secondary metabolite biosynthesis. Its function is as follows. Terpene cyclase; part of the gene cluster that mediates the biosynthesis of the indole diterpenes penitrems. The geranylgeranyl diphosphate (GGPP) synthase penG catalyzes the first step in penitrem biosynthesis via conversion of farnesyl pyrophosphate and isopentyl pyrophosphate into geranylgeranyl pyrophosphate (GGPP). Condensation of indole-3-glycerol phosphate with GGPP by the prenyl transferase penC then forms 3-geranylgeranylindole (3-GGI). Epoxidation by the FAD-dependent monooxygenase penM leads to a epoxidized-GGI that is substrate of the terpene cyclase penB for cyclization to yield paspaline. Paspaline is subsequently converted to 13-desoxypaxilline by the cytochrome P450 monooxygenase penP, the latter being then converted to paxilline by the cytochrome P450 monooxygenase penQ. Paxilline is converted to beta-paxitriol via C-10 ketoreduction by the short-chain dehydrogenase PC-15 which can be monoprenylated at the C-20 by the indole diterpene prenyltransferase penD. A two-step elimination (acetylation and elimination) process performed by the O-acetyltransferase PC-16 and the P.simplicissimum ptmI-ortholog not yet identified in P.crustosum, leads to the production of the prenylated form of penijanthine. The FAD-linked oxidoreductase ptmO then converts the prenylated form of penijanthine into PC-M5 which is in turn transformed into PC-M4 by the aromatic dimethylallyltransferase PC-22. A series of oxidation steps involving 4 cytochrome P450 monooxygenases (PC-21, PC-05, PC-23, PC-20) and a FAD-dependent monooxygenase (PC-14) are required for the transformation of PC-M4 to penitrems A and E. Synthesis of these final products is proposed to proceed via penitrems D and C (PC-21, PC-05, PC-14) and penitrems B and F (PC-21, PC-05, PC-14, PC-23). The protein is Terpene cyclase penB (penB) of Penicillium crustosum (Blue mold fungus).